Here is a 237-residue protein sequence, read N- to C-terminus: Probable septum site-determining protein MinC (237 aa).

The protein belongs to the MinC family. As to quaternary structure, interacts with MinD and FtsZ.

In terms of biological role, cell division inhibitor that blocks the formation of polar Z ring septums. Rapidly oscillates between the poles of the cell to destabilize FtsZ filaments that have formed before they mature into polar Z rings. Prevents FtsZ polymerization. The sequence is that of Probable septum site-determining protein MinC from Buchnera aphidicola subsp. Acyrthosiphon pisum (strain 5A).